The sequence spans 500 residues: DNA double-strand break repair helicase HerA (500 aa).

ATP-binding positions include Arg-142, 151–156 (GSGKSN), and 459–460 (KI).

This sequence belongs to the HerA family. Homohexamer. Forms a complex with NurA.

The enzyme catalyses Couples ATP hydrolysis with the unwinding of duplex DNA at the replication fork by translocating in the 5'-3' direction. This creates two antiparallel DNA single strands (ssDNA). The leading ssDNA polymer is the template for DNA polymerase III holoenzyme which synthesizes a continuous strand.. It catalyses the reaction ATP + H2O = ADP + phosphate + H(+). The catalysed reaction is Couples ATP hydrolysis with the unwinding of duplex DNA by translocating in the 3'-5' direction.. ATPase activity is stimulated in the presence of linear double-stranded (ds)DNA. Helicase activity requires the presence of NurA. LhrC-Core (Hel112) inhibits the exonuclease activity of the HerA-NurA complex on ss- and dsDNA, has no effect on the nicking activity of NurA. In terms of biological role, involved in DNA double-strand break (DSB) repair. Probably acts with NurA to stimulate resection of the 5' strand and produce the long 3' single-strand that is required for RadA loading. NurA and HerA together stimulate the end-resection of six nucleotides of a linear DNA substrate. Has DNA-dependent ATPase activity and bidirectional DNA helicase activity. Preferentially binds single stranded (ss)DNA, bubble and semiforked DNA substrate over other DNA molecules tested. Stimulates the exo- but not endonuclease activity of NurA. The chain is DNA double-strand break repair helicase HerA from Saccharolobus solfataricus (strain ATCC 35092 / DSM 1617 / JCM 11322 / P2) (Sulfolobus solfataricus).